The following is a 110-amino-acid chain: HTH-type transcriptional regulator TnrA (110 aa).

The region spanning 13–81 (VISIGIVSEL…TAEILKDMRK (69 aa)) is the HTH merR-type domain. The H-T-H motif DNA-binding region spans 16–35 (IGIVSELTGLSVRQIRYYEE).

As to quaternary structure, homodimer. Under conditions of nitrogen excess, TnrA forms a stable complex with feedback-inhibited GlnA. Interacts with GlnK-AmtB complex.

Its subcellular location is the cell membrane. With respect to regulation, under conditions of nitrogen excess, the DNA-binding activity is inhibited by the formation of a stable complex with feedback-inhibited GlnA. The presence of glutamine and AMP increases the inhibitory activity of glutamine synthetase by more than 1000-fold. Its function is as follows. Transcription regulator that actives the transcription of genes required for nitrogen assimilation such as nrgAB (ammonium transport), nasABCDEF (nitrate/nitrite assimilation), ureABC (urea degradation) and gabP (GABA transport), during nitrogen limitation. Also represses glnRA and gltAB in the absence of ammonium. On the contrary of the MerR members, which require longer DNA sites for high-affinity binding, TnrA requires a DNA sequence of 17 nucleotides as minimal binding site. This Bacillus subtilis (strain 168) protein is HTH-type transcriptional regulator TnrA.